Reading from the N-terminus, the 367-residue chain is Cytochrome b (367 aa).

4 consecutive transmembrane segments (helical) span residues 20 to 40 (MGSI…LLSM), 64 to 85 (WFLR…YAHI), 101 to 121 (WMVG…GYVL), and 166 to 186 (FFSL…LHII). Heme b-binding residues include His-70 and His-84. Residues His-170 and His-184 each coordinate heme b. An a ubiquinone-binding site is contributed by His-189. The next 4 helical transmembrane spans lie at 214–234 (IKDS…TFFS), 276–296 (LGGV…PLSS), 308–328 (IYQV…WLGA), and 335–355 (YLSL…LLGM).

Belongs to the cytochrome b family. In terms of assembly, the main subunits of complex b-c1 are: cytochrome b, cytochrome c1 and the Rieske protein. It depends on heme b as a cofactor.

The protein localises to the mitochondrion inner membrane. Its function is as follows. Component of the ubiquinol-cytochrome c reductase complex (complex III or cytochrome b-c1 complex) that is part of the mitochondrial respiratory chain. The b-c1 complex mediates electron transfer from ubiquinol to cytochrome c. Contributes to the generation of a proton gradient across the mitochondrial membrane that is then used for ATP synthesis. This Albinaria caerulea (Land snail) protein is Cytochrome b (MT-CYB).